A 600-amino-acid polypeptide reads, in one-letter code: NADH-ubiquinone oxidoreductase chain 5 (600 aa).

16 helical membrane passes run 1–21, 27–47, 81–101, 110–130, 136–156, 178–198, 200–220, 241–261, 274–294, 301–323, 327–347, 366–386, 404–424, 450–470, 488–508, and 520–540; these read MYIL…LFGR, GAGI…LLIF, LTAV…IFST, VPRF…LVTS, LFIG…FWLT, FVLA…ASVF, IVAL…FIGA, TPVS…FLLI, LMVV…IGLV, VIAY…SQYS, FHLM…GSVI, IPFT…FPYL, YLAF…AYSL, WNLT…GYLT, SIKL…VVLY, and SPVG…NYII.

It belongs to the complex I subunit 5 family.

The protein resides in the mitochondrion inner membrane. It catalyses the reaction a ubiquinone + NADH + 5 H(+)(in) = a ubiquinol + NAD(+) + 4 H(+)(out). Its function is as follows. Core subunit of the mitochondrial membrane respiratory chain NADH dehydrogenase (Complex I) that is believed to belong to the minimal assembly required for catalysis. Complex I functions in the transfer of electrons from NADH to the respiratory chain. The immediate electron acceptor for the enzyme is believed to be ubiquinone. The polypeptide is NADH-ubiquinone oxidoreductase chain 5 (ND5) (Metridium senile (Brown sea anemone)).